Consider the following 64-residue polypeptide: MAVQKSRVTPSRRGMRRAHDALSAKQLSTDPTTGEVHLRHHITADGFYRGKKVIQTKTSAVEED.

Positions 1–35 (MAVQKSRVTPSRRGMRRAHDALSAKQLSTDPTTGE) are disordered.

Belongs to the bacterial ribosomal protein bL32 family.

The chain is Large ribosomal subunit protein bL32 from Stenotrophomonas maltophilia (strain R551-3).